A 133-amino-acid polypeptide reads, in one-letter code: Small ribosomal subunit protein uS8 (133 aa).

This sequence belongs to the universal ribosomal protein uS8 family. As to quaternary structure, part of the 30S ribosomal subunit. Contacts proteins S5 and S12.

In terms of biological role, one of the primary rRNA binding proteins, it binds directly to 16S rRNA central domain where it helps coordinate assembly of the platform of the 30S subunit. The chain is Small ribosomal subunit protein uS8 from Orientia tsutsugamushi (strain Boryong) (Rickettsia tsutsugamushi).